The primary structure comprises 353 residues: Uroporphyrinogen decarboxylase (353 aa).

Substrate-binding positions include 29-33 (RQAGR), Asp79, Tyr156, Thr211, and His329.

It belongs to the uroporphyrinogen decarboxylase family. In terms of assembly, homodimer.

It localises to the cytoplasm. The catalysed reaction is uroporphyrinogen III + 4 H(+) = coproporphyrinogen III + 4 CO2. Its pathway is porphyrin-containing compound metabolism; protoporphyrin-IX biosynthesis; coproporphyrinogen-III from 5-aminolevulinate: step 4/4. Its function is as follows. Catalyzes the decarboxylation of four acetate groups of uroporphyrinogen-III to yield coproporphyrinogen-III. The protein is Uroporphyrinogen decarboxylase of Alcanivorax borkumensis (strain ATCC 700651 / DSM 11573 / NCIMB 13689 / SK2).